We begin with the raw amino-acid sequence, 175 residues long: Two-on-two hemoglobin-3 (175 aa).

Residues tyrosine 85 and histidine 98 each coordinate heme. The interval 153 to 175 (QNEKPKHKPQCACKHAANKPAEE) is disordered.

Belongs to the truncated hemoglobin family. Group II subfamily. Homodimer when ferric. Interacts with RGLG3 and RGLG4. Heme serves as cofactor. In terms of tissue distribution, expressed ubiquitously, with higher levels in root tissue than in shoot tissue.

Functionally, hemoglobin-like protein that exhibits an unusual concentration-independent binding of O(2) and CO. May promote shoot organogenesis from root explants in vitro. Inhibits RGLG3 and RGLG4 ubiquitination activity. The polypeptide is Two-on-two hemoglobin-3 (GLB3) (Arabidopsis thaliana (Mouse-ear cress)).